The chain runs to 98 residues: Small ribosomal subunit protein bS6 (98 aa).

Belongs to the bacterial ribosomal protein bS6 family.

Its function is as follows. Binds together with bS18 to 16S ribosomal RNA. The sequence is that of Small ribosomal subunit protein bS6 from Staphylococcus carnosus (strain TM300).